We begin with the raw amino-acid sequence, 397 residues long: MYILDTGARFSAVRFSPVFNPPPTSLRRRYFIVRANLPFPKHQAKYHKELEVAIDAVDRACRLCVDVKRSLFSSKEKIVEKNDQTPVTIADFGVQALVSLELSKLFPSIPLVAEEDSHFVRANNLVSSVVSEVKSKASIGDNHLSDADVLEAIDRGGKDAYTFCNKPATYWVLDPIDGTRGFLKGDEALYVVGLALVVDNEIVLGVMGCPNWPGDSSDGSTGTLMLSHIGCGTWTKKLQNVSGNVAGDWIRCFVDACVLMNKARFCIQESQTWESLPLSGFFDASTVSEDLKHKEILLLPTCCGSLCKYLMVASGRASVFLLRAKTQRTIKSWDHAVGIICVHEAGGKVTDWEGDEINLEEDQSERRLIFPAGGVVVSNGSLHNQILEMISSASPTL.

The transit peptide at 1 to 16 directs the protein to the mitochondrion; sequence MYILDTGARFSAVRFS. The active-site Proton acceptor is the D91. Residues E114, D174, I176, and D177 each coordinate Mg(2+). The Proton acceptor role is filled by T179. Adenosine 3',5'-bisphosphate is bound by residues T179, S305, K308, and D334. Positions 305, 308, and 334 each coordinate AMP. D334 lines the Mg(2+) pocket.

Belongs to the inositol monophosphatase superfamily. It depends on Mg(2+) as a cofactor.

It localises to the mitochondrion. The catalysed reaction is 3'-phosphoadenylyl sulfate + H2O = adenosine 5'-phosphosulfate + phosphate. The enzyme catalyses adenosine 3',5'-bisphosphate + H2O = AMP + phosphate. It catalyses the reaction adenosine 2',5'-bisphosphate + H2O = AMP + phosphate. Functionally, phosphatase that converts adenosine 3'-phosphate 5'-phosphosulfate (PAPS) to adenosine 5'-phosphosulfate (APS) and 3'(2')-phosphoadenosine 5'-phosphate (PAP) to AMP. The polypeptide is Putative 3'(2'),5'-bisphosphate nucleotidase, mitochondrial (Arabidopsis thaliana (Mouse-ear cress)).